The primary structure comprises 151 residues: 3-hydroxyacyl-[acyl-carrier-protein] dehydratase FabZ (151 aa).

His56 is a catalytic residue.

It belongs to the thioester dehydratase family. FabZ subfamily.

It is found in the cytoplasm. The catalysed reaction is a (3R)-hydroxyacyl-[ACP] = a (2E)-enoyl-[ACP] + H2O. Its function is as follows. Involved in unsaturated fatty acids biosynthesis. Catalyzes the dehydration of short chain beta-hydroxyacyl-ACPs and long chain saturated and unsaturated beta-hydroxyacyl-ACPs. The protein is 3-hydroxyacyl-[acyl-carrier-protein] dehydratase FabZ of Rhodopseudomonas palustris (strain BisB18).